A 950-amino-acid chain; its full sequence is Protein lin-54 homolog (950 aa).

5 disordered regions span residues Met-1–Asn-63, Asn-366–Gly-387, Ala-500–His-523, Lys-533–Ala-552, and Val-638–Gly-702. Residues Ser-10–Leu-26 show a composition bias toward acidic residues. The span at Thr-29–Ile-39 shows a compositional bias: basic and acidic residues. A compositionally biased stretch (acidic residues) spans Glu-40–Ala-55. Composition is skewed to low complexity over residues Asn-366–Ser-386, Ala-500–Ser-516, Ser-535–Ala-548, and Gln-661–Leu-682. The region spanning Arg-737–Asp-849 is the CRC domain.

Belongs to the lin-54 family. Component of the DREAM complex at least composed of Myb, Caf1-55, mip40, mip120, mip130, E2f2, Dp, Rbf, Rbf2, lin-52, HDAC1/Rpd3 and l(3)mbt.

It localises to the nucleus. Functionally, component of the DREAM complex, a multiprotein complex that can both act as a transcription activator or repressor depending on the context. In follicle cells, the complex plays a central role in the site-specific DNA replication at the chorion loci. During development, the complex represses transcription of developmentally controlled E2F target genes. This chain is Protein lin-54 homolog (mip120), found in Drosophila melanogaster (Fruit fly).